The chain runs to 90 residues: Probable Fe(2+)-trafficking protein (90 aa).

It belongs to the Fe(2+)-trafficking protein family.

In terms of biological role, could be a mediator in iron transactions between iron acquisition and iron-requiring processes, such as synthesis and/or repair of Fe-S clusters in biosynthetic enzymes. This is Probable Fe(2+)-trafficking protein from Idiomarina loihiensis (strain ATCC BAA-735 / DSM 15497 / L2-TR).